The chain runs to 1556 residues: uncharacterized protein (1556 aa).

This is an uncharacterized protein from Ictalurid herpesvirus 1 (strain Auburn) (IcHV-1).